Reading from the N-terminus, the 215-residue chain is Large ribosomal subunit protein uL4 (215 aa).

The interval 51–88 (KGMGEVSGTTKKPYRQKGTGNARQGSLRAPQFRTGGAV) is disordered.

The protein belongs to the universal ribosomal protein uL4 family. As to quaternary structure, part of the 50S ribosomal subunit.

In terms of biological role, one of the primary rRNA binding proteins, this protein initially binds near the 5'-end of the 23S rRNA. It is important during the early stages of 50S assembly. It makes multiple contacts with different domains of the 23S rRNA in the assembled 50S subunit and ribosome. Functionally, forms part of the polypeptide exit tunnel. The sequence is that of Large ribosomal subunit protein uL4 from Granulibacter bethesdensis (strain ATCC BAA-1260 / CGDNIH1).